Here is a 261-residue protein sequence, read N- to C-terminus: Bidirectional sugar transporter SWEET1b (261 aa).

Residues 1–6 (MEDLAK) lie on the Extracellular side of the membrane. Residues 7 to 27 (FLFGVSGNVIALFLFLSPVPT) traverse the membrane as a helical segment. One can recognise a MtN3/slv 1 domain in the interval 7–95 (FLFGVSGNVI…VVFLVFASTH (89 aa)). Over 28–42 (FWRIIRRKSTEDFSG) the chain is Cytoplasmic. A helical transmembrane segment spans residues 43–63 (VPYNMTLINCLLSAWYGLPFV). Topologically, residues 64-71 (SPNNILVS) are extracellular. A helical membrane pass occupies residues 72–92 (TINGAGAVIETAYVVVFLVFA). At 93–101 (STHKTRLRT) the chain is on the cytoplasmic side. The helical transmembrane segment at 102 to 122 (LGLAAAVASVFAAVALVSLLA) threads the bilayer. The Extracellular portion of the chain corresponds to 123 to 129 (LHGQHRK). A helical transmembrane segment spans residues 130 to 150 (LLCGVAATVCSICMYASPLSI). Residues 133-215 (GVAATVCSIC…VLYAIYRNNK (83 aa)) enclose the MtN3/slv 2 domain. At 151-164 (MRLVIKTKSVEYMP) the chain is on the cytoplasmic side. Residues 165–185 (FLMSLAVFLCGTSWFIYGLLG) form a helical membrane-spanning segment. Residues 186–189 (RDPF) lie on the Extracellular side of the membrane. The helical transmembrane segment at 190–210 (VTIPNGCGSFLGAVQLVLYAI) threads the bilayer. Over 211-261 (YRNNKGAGGGSGGKQAGDDDVEMAEGRNNKVADGGAADDDSTAGGKAGTEV) the chain is Cytoplasmic. Residues 218–261 (GGGSGGKQAGDDDVEMAEGRNNKVADGGAADDDSTAGGKAGTEV) form a disordered region.

Belongs to the SWEET sugar transporter family. As to quaternary structure, forms homodimers. In terms of tissue distribution, highly expressed in leaves. Expressed at very low levels in roots, stems and panicles.

Its subcellular location is the cell membrane. The enzyme catalyses D-glucose(out) = D-glucose(in). It catalyses the reaction D-galactose(in) = D-galactose(out). Functionally, mediates transport of sugars across the plasma membrane. Can transport glucose and galactose, but not fructose, mannose and sucrose. In Oryza sativa subsp. japonica (Rice), this protein is Bidirectional sugar transporter SWEET1b (SWEET1B).